The sequence spans 124 residues: Urease subunit beta (124 aa).

The protein belongs to the urease beta subunit family. In terms of assembly, heterotrimer of UreA (gamma), UreB (beta) and UreC (alpha) subunits. Three heterotrimers associate to form the active enzyme.

Its subcellular location is the cytoplasm. The catalysed reaction is urea + 2 H2O + H(+) = hydrogencarbonate + 2 NH4(+). It functions in the pathway nitrogen metabolism; urea degradation; CO(2) and NH(3) from urea (urease route): step 1/1. This Bacillus subtilis (strain 168) protein is Urease subunit beta.